Reading from the N-terminus, the 184-residue chain is Probable RNA 2'-phosphotransferase (184 aa).

This sequence belongs to the KptA/TPT1 family.

Functionally, removes the 2'-phosphate from RNA via an intermediate in which the phosphate is ADP-ribosylated by NAD followed by a presumed transesterification to release the RNA and generate ADP-ribose 1''-2''-cyclic phosphate (APPR&gt;P). May function as an ADP-ribosylase. This Escherichia coli O139:H28 (strain E24377A / ETEC) protein is Probable RNA 2'-phosphotransferase.